Here is a 277-residue protein sequence, read N- to C-terminus: Large ribosomal subunit protein uL2 (277 aa).

2 disordered regions span residues 37–58 (LHSK…GGGH) and 222–277 (GVAM…NRRR). Over residues 268-277 (VRRRKQNRRR) the composition is skewed to basic residues.

This sequence belongs to the universal ribosomal protein uL2 family. In terms of assembly, part of the 50S ribosomal subunit. Forms a bridge to the 30S subunit in the 70S ribosome.

One of the primary rRNA binding proteins. Required for association of the 30S and 50S subunits to form the 70S ribosome, for tRNA binding and peptide bond formation. It has been suggested to have peptidyltransferase activity; this is somewhat controversial. Makes several contacts with the 16S rRNA in the 70S ribosome. The polypeptide is Large ribosomal subunit protein uL2 (Parafrankia sp. (strain EAN1pec)).